A 432-amino-acid chain; its full sequence is Serine hydroxymethyltransferase (432 aa).

Residues leucine 117 and 121–123 (GHL) each bind (6S)-5,6,7,8-tetrahydrofolate. An N6-(pyridoxal phosphate)lysine modification is found at lysine 226. 366 to 368 (SPF) serves as a coordination point for (6S)-5,6,7,8-tetrahydrofolate.

The protein belongs to the SHMT family. As to quaternary structure, homodimer. Pyridoxal 5'-phosphate serves as cofactor.

It localises to the cytoplasm. The catalysed reaction is (6R)-5,10-methylene-5,6,7,8-tetrahydrofolate + glycine + H2O = (6S)-5,6,7,8-tetrahydrofolate + L-serine. It functions in the pathway one-carbon metabolism; tetrahydrofolate interconversion. It participates in amino-acid biosynthesis; glycine biosynthesis; glycine from L-serine: step 1/1. In terms of biological role, catalyzes the reversible interconversion of serine and glycine with tetrahydrofolate (THF) serving as the one-carbon carrier. This reaction serves as the major source of one-carbon groups required for the biosynthesis of purines, thymidylate, methionine, and other important biomolecules. Also exhibits THF-independent aldolase activity toward beta-hydroxyamino acids, producing glycine and aldehydes, via a retro-aldol mechanism. The sequence is that of Serine hydroxymethyltransferase from Salinibacter ruber (strain DSM 13855 / M31).